The primary structure comprises 352 residues: Aspartic protease Bla g 2 (352 aa).

The first 19 residues, M1 to A19, serve as a signal peptide directing secretion. A propeptide spans A20–R24 (removed in mature form). One can recognise a Peptidase A1 domain in the interval Y39 to G346. The active site involves D55. Cystine bridges form between C59/C151, C68/C73, and C75/C136. N-linked (GlcNAc...) asparagine glycosylation occurs at N117. Zn(2+) is bound by residues H178 and H186. The active site involves D239. 2 disulfide bridges follow: C261–C272 and C276–C309. Residue N295 is glycosylated (N-linked (GlcNAc...) asparagine). D326 and D330 together coordinate Zn(2+). The N-linked (GlcNAc...) asparagine glycan is linked to N340.

This sequence belongs to the peptidase A1 family. In terms of assembly, homodimer.

Functions as a digestive enzyme in the cockroach. The protein is Aspartic protease Bla g 2 of Blattella germanica (German cockroach).